The chain runs to 158 residues: NAD(P)H-quinone oxidoreductase subunit J, chloroplastic (158 aa).

It belongs to the complex I 30 kDa subunit family. As to quaternary structure, NDH is composed of at least 16 different subunits, 5 of which are encoded in the nucleus.

It is found in the plastid. The protein localises to the chloroplast thylakoid membrane. The enzyme catalyses a plastoquinone + NADH + (n+1) H(+)(in) = a plastoquinol + NAD(+) + n H(+)(out). It catalyses the reaction a plastoquinone + NADPH + (n+1) H(+)(in) = a plastoquinol + NADP(+) + n H(+)(out). Functionally, NDH shuttles electrons from NAD(P)H:plastoquinone, via FMN and iron-sulfur (Fe-S) centers, to quinones in the photosynthetic chain and possibly in a chloroplast respiratory chain. The immediate electron acceptor for the enzyme in this species is believed to be plastoquinone. Couples the redox reaction to proton translocation, and thus conserves the redox energy in a proton gradient. The polypeptide is NAD(P)H-quinone oxidoreductase subunit J, chloroplastic (Lactuca sativa (Garden lettuce)).